We begin with the raw amino-acid sequence, 417 residues long: Serine hydroxymethyltransferase (417 aa).

Residue K54 is modified to N6-acetyllysine. Residues L121 and G125–L127 each bind (6S)-5,6,7,8-tetrahydrofolate. K229 bears the N6-(pyridoxal phosphate)lysine mark. An N6-acetyllysine mark is found at K250, K285, and K354. S355–F357 is a binding site for (6S)-5,6,7,8-tetrahydrofolate. An N6-acetyllysine modification is found at K375.

It belongs to the SHMT family. In terms of assembly, homodimer. The cofactor is pyridoxal 5'-phosphate.

It localises to the cytoplasm. It carries out the reaction (6R)-5,10-methylene-5,6,7,8-tetrahydrofolate + glycine + H2O = (6S)-5,6,7,8-tetrahydrofolate + L-serine. It functions in the pathway one-carbon metabolism; tetrahydrofolate interconversion. Its pathway is amino-acid biosynthesis; glycine biosynthesis; glycine from L-serine: step 1/1. Its function is as follows. Catalyzes the reversible interconversion of serine and glycine with tetrahydrofolate (THF) serving as the one-carbon carrier. This reaction serves as the major source of one-carbon groups required for the biosynthesis of purines, thymidylate, methionine, and other important biomolecules. Also exhibits THF-independent aldolase activity toward beta-hydroxyamino acids, producing glycine and aldehydes, via a retro-aldol mechanism. In Escherichia coli O1:K1 / APEC, this protein is Serine hydroxymethyltransferase.